A 579-amino-acid chain; its full sequence is MFESQDHSIRTITELKVRTFEEEMDPVRSWVRNVGVIDANIAAQSGVALSRAHFEKQPPSNLRKSNFFHFVLALYDRNGQPVEVERTSFVDFVEQDKTGEKTNNGTHYKLQLLYSNGVRTEQDLYARLIDSVTKQPISYEGQNKNPEMCRVLLTHEVMCSRCCEKKSCGNRNETPSDPVIIDRFFLKFFLKCNQNCLKTAGNPRDMRRFQVVLSTTVCVDGPVLAISDNMFVHNNSKHGRRSRRMDPNETVENNMEYATPCIKAISPSEGWTTGGAMVIVIGENFFDGLQVVFGSMLVWSELITPHAIRVQTPPRHIPGVVEVTLSYKSKQFCKGAPGRFIYTALNEPTIDYGFQRLQKLIPRHPGDPDKLAKEMLLKRAADVVESLYGNTTSNQDMLLKRAADIAEALYSVPRPHSQLQAMPSSPVHGSVMGLSSYPTQLGVSIGEPGQTSGQGYTRNSSSLSPRGYPSSSTPQQSAYGSNGGMSYGAVPMSSLGVSGSPGFNSASPNSSPYAIMPSSPPGSSSSSSLLPFSSFPSSTKQKSAFAPVLRPQGFPHHPSAKTSGGTSFRAMTGLVVPPM.

The tract at residues 63–66 (RKSN) is interaction with DNA. The segment at 149–168 (CRVLLTHEVMCSRCCEKKSC) adopts a C5-type zinc-finger fold. Interaction with DNA regions lie at residues 195 to 202 (NCLKTAGN) and 234 to 237 (NNSK). The region spanning 260–343 (PCIKAISPSE…KGAPGRFIYT (84 aa)) is the IPT/TIG domain. Disordered regions lie at residues 442 to 482 (GVSI…YGSN), 514 to 533 (AIMP…LPFS), and 549 to 579 (LRPQ…VPPM). The segment covering 449–459 (GQTSGQGYTRN) has biased composition (polar residues). Composition is skewed to low complexity over residues 460–472 (SSSL…PSSS) and 521–533 (PGSS…LPFS).

The protein belongs to the COE family.

The protein localises to the nucleus. The polypeptide is Transcription factor COE2 (coe2) (Danio rerio (Zebrafish)).